The sequence spans 237 residues: Dihydroceramide fatty acyl 2-hydroxylase FAH1 (237 aa).

2 helical membrane-spanning segments follow: residues 50-70 (LTLTVWWAVPVIWLPVVVWCI) and 80-100 (LPEIVPIVVMGIFIWTFFEYV). Zn(2+)-binding residues include H102, H107, H123, H126, and H127. Transmembrane regions (helical) follow at residues 137–157 (VFPPTATAILCFPFWNIAKAI) and 164–184 (PALFGGGMLGYVMYDVTHYYL). Zn(2+)-binding residues include H181, H185, H201, H204, and H205.

It belongs to the sterol desaturase family. As to quaternary structure, interacts with CYTB5-A, CYTB5-B, CYTB5-C and CYTB5-D. Interacts indirectly with BI-1 via CYTB5-D. Zn(2+) serves as cofactor. In terms of tissue distribution, expressed in leaves, roots, flowers and seeds.

It localises to the endoplasmic reticulum membrane. It catalyses the reaction an N-(1,2-saturated acyl)sphinganine + 2 Fe(II)-[cytochrome b5] + O2 + 2 H(+) = an N-[(2'R)-hydroxyacyl]sphinganine + 2 Fe(III)-[cytochrome b5] + H2O. Its function is as follows. Fatty acid 2-hydroxylase involved in the alpha-hydroxylation of sphingolipid-associated very long-chain fatty acids (VLCFA). Probably involved in the resistance response to oxidative stress. The chain is Dihydroceramide fatty acyl 2-hydroxylase FAH1 from Arabidopsis thaliana (Mouse-ear cress).